We begin with the raw amino-acid sequence, 100 residues long: Urease subunit gamma (100 aa).

This sequence belongs to the urease gamma subunit family. Heterotrimer of UreA (gamma), UreB (beta) and UreC (alpha) subunits. Three heterotrimers associate to form the active enzyme.

The protein localises to the cytoplasm. It carries out the reaction urea + 2 H2O + H(+) = hydrogencarbonate + 2 NH4(+). It participates in nitrogen metabolism; urea degradation; CO(2) and NH(3) from urea (urease route): step 1/1. The protein is Urease subunit gamma of Corynebacterium efficiens (strain DSM 44549 / YS-314 / AJ 12310 / JCM 11189 / NBRC 100395).